Reading from the N-terminus, the 109-residue chain is Flagellar hook-basal body complex protein FliE 2 (109 aa).

This sequence belongs to the FliE family.

It localises to the bacterial flagellum basal body. The sequence is that of Flagellar hook-basal body complex protein FliE 2 (fliE2) from Bradyrhizobium diazoefficiens (strain JCM 10833 / BCRC 13528 / IAM 13628 / NBRC 14792 / USDA 110).